The chain runs to 403 residues: Phosphopentomutase (403 aa).

Positions 13, 298, 303, 339, 340, and 351 each coordinate Mn(2+).

The protein belongs to the phosphopentomutase family. Requires Mn(2+) as cofactor.

The protein localises to the cytoplasm. The enzyme catalyses 2-deoxy-alpha-D-ribose 1-phosphate = 2-deoxy-D-ribose 5-phosphate. The catalysed reaction is alpha-D-ribose 1-phosphate = D-ribose 5-phosphate. It functions in the pathway carbohydrate degradation; 2-deoxy-D-ribose 1-phosphate degradation; D-glyceraldehyde 3-phosphate and acetaldehyde from 2-deoxy-alpha-D-ribose 1-phosphate: step 1/2. Functionally, isomerase that catalyzes the conversion of deoxy-ribose 1-phosphate (dRib-1-P) and ribose 1-phosphate (Rib-1-P) to deoxy-ribose 5-phosphate (dRib-5-P) and ribose 5-phosphate (Rib-5-P), respectively. In Streptococcus thermophilus, this protein is Phosphopentomutase.